The following is a 150-amino-acid chain: MNVILLDKVANLGSLGDQVSVKAGYARNFLLPYGKAVVANAANTEVFEARRAELEAKLAAELATATARADKLTALEAVVIASKAGDEGKLFGSIGNRDIADAVTAAGVALAKSEVRLPLGALRTTGSFEIEVQVHAEVKAVVKIAIVAEA.

This sequence belongs to the bacterial ribosomal protein bL9 family.

Functionally, binds to the 23S rRNA. In Shewanella frigidimarina (strain NCIMB 400), this protein is Large ribosomal subunit protein bL9.